The sequence spans 431 residues: O-Mevalon transferase macI (431 aa).

An N-linked (GlcNAc...) asparagine glycan is attached at N176. 4 consecutive transmembrane segments (helical) span residues 198-218, 301-321, 336-356, and 404-424; these read IYALIVCGFAITIYSHFAILM, LLMMSFVISGLIHACGTYQVT, YFALQGMAIIAEDFGCWVLGI, and LFAALELVRVSAVAVPGNFVA.

This sequence belongs to the wax synthase family.

It localises to the membrane. Its pathway is secondary metabolite biosynthesis; terpenoid biosynthesis. O-Mevalon transferase; part of the gene cluster that mediates the biosynthesis of macrophorins, isoprenoid epoxycyclohexenones containing cyclized drimane moieties. The first step of the pathway is the synthesis of 6-methylsalicylic acid (6-MSA) by the polyketide synthase macA. 6-MSA is then converted to m-cresol by the decarboxylase macB. The cytochrome P450 monooxygenase macC then catalyzes the oxidation of m-cresol to toluquinol. Epoxidation of toluquinol is then performed by the short chain dehydrogenase macD, with the help of macE, and a further prenylation by macG leads to 7-deacetoxyyanuthone A. The next step is the hydroxylation of C-22 of 7-deacetoxyyanuthone A by the cytochrome P450 monooxygenase macH to yield 22-deacetylyanuthone A. O-Mevalon transferase macI then attaches mevalon to the hydroxyl group of 22-deacetylyanuthone A to produce yanuthone E. The terpene cyclase macJ catalyzes the cyclization of 22-deacetylyanuthone A to macrophorin A. MacJ is also able to catalyze cyclization of yanuthone E and 7-deacetoxyyanuthone A to their corresponding macrophorins. The macJ products can be further modified by macH and macJ, as well as by the FAD-dependent monooxygenase macF, to produce additional macrophorins, including 4'-oxomacrophorin A, 4'-oxomacrophorin D and 4'-oxomacrophorin E. This is O-Mevalon transferase macI from Penicillium terrestre.